The primary structure comprises 145 residues: Transcription antitermination protein NusB (145 aa).

It belongs to the NusB family.

Functionally, involved in transcription antitermination. Required for transcription of ribosomal RNA (rRNA) genes. Binds specifically to the boxA antiterminator sequence of the ribosomal RNA (rrn) operons. This is Transcription antitermination protein NusB from Geobacter sp. (strain M21).